A 1410-amino-acid chain; its full sequence is Pogo transposable element with ZNF domain (1410 aa).

A disordered region spans residues 238-291 (RSTVPQSQSQQTKSTPSTSTTPTATQPTSLGQLAVQSPGQSNQTTNPKLAPSFP). Low complexity predominate over residues 239–266 (STVPQSQSQQTKSTPSTSTTPTATQPTS). Residues 267-284 (LGQLAVQSPGQSNQTTNP) show a composition bias toward polar residues. Lys-319 participates in a covalent cross-link: Glycyl lysine isopeptide (Lys-Gly) (interchain with G-Cter in SUMO2). Residues 332 to 361 (QSPGPVVVSNNSSAHGSQRTSGPESSMKVT) form a disordered region. Ser-333 carries the phosphoserine modification. The segment covering 345–361 (AHGSQRTSGPESSMKVT) has biased composition (polar residues). Residue Lys-359 forms a Glycyl lysine isopeptide (Lys-Gly) (interchain with G-Cter in SUMO2) linkage. At Ser-363 the chain carries Phosphoserine. The C2H2-type 1; atypical zinc-finger motif lies at 375 to 397 (KICPRCNAQFRVTEALRGHMCYC). Positions 409 to 456 (KSLDSEPSVPSAAKPPSPEKTAPVASTPSSTPIPALSPPTKVPEPNEN) are disordered. Residue Lys-422 forms a Glycyl lysine isopeptide (Lys-Gly) (interchain with G-Cter in SUMO2) linkage. Position 425 is a phosphoserine (Ser-425). Thr-439 bears the Phosphothreonine mark. At Ser-445 the chain carries Phosphoserine. A Glycyl lysine isopeptide (Lys-Gly) (interchain with G-Cter in SUMO2) cross-link involves residue Lys-449. Position 463 is a phosphothreonine (Thr-463). Lys-489 participates in a covalent cross-link: Glycyl lysine isopeptide (Lys-Gly) (interchain with G-Cter in SUMO2). C2H2-type zinc fingers lie at residues 494 to 516 (FRCP…MKHH), 530 to 553 (TICQ…ENVH), 560 to 583 (TKCK…KDTH), 590 to 613 (YVCQ…RMIH), 619 to 641 (LLCP…YMRH), and 647 to 670 (YHCN…LQHH). Lys-629 participates in a covalent cross-link: Glycyl lysine isopeptide (Lys-Gly) (interchain with G-Cter in SUMO2). Residue Lys-677 forms a Glycyl lysine isopeptide (Lys-Gly) (interchain with G-Cter in SUMO2) linkage. Residues 693-715 (SRGQPRTVPVSSNDTPPSALQEA) form a disordered region. A compositionally biased stretch (polar residues) spans 701–710 (PVSSNDTPPS). Residues 771 to 794 (VHCSLCRYSTCCSRAYANHMINNH) form a C2H2-type 8 zinc finger. Lys-801 is covalently cross-linked (Glycyl lysine isopeptide (Lys-Gly) (interchain with G-Cter in SUMO2)). The required for interaction with CBX5 stretch occupies residues 810–850 (VSGIKLACTSCTFVTSVGDAMAKHLVFNPSHRSSSILPRGL). The segment at 815–840 (LACTSCTFVTSVGDAMAKHLVFNPSH) adopts a C2H2-type 9 zinc-finger fold. Residue Ser-856 is modified to Phosphoserine. Disordered stretches follow at residues 857–927 (RHGQ…PQAL) and 942–969 (VDDQ…GVGK). Residues 860-870 (QTRDRVHDRNV) are compositionally biased toward basic and acidic residues. Residue Lys-883 forms a Glycyl lysine isopeptide (Lys-Gly) (interchain with G-Cter in SUMO2) linkage. Positions 892–915 (ATPAEPEELLTPLAPALPSPASTA) are enriched in low complexity. Positions 1015–1085 (GENLEGKYLS…MLRHHLTPHA (71 aa)) constitute an HTH CENPB-type domain. Positions 1117-1323 (LPLSMIVAID…DCPELVQRSF (207 aa)) constitute a DDE-1 domain. Ser-1338 carries the phosphoserine modification. A coiled-coil region spans residues 1340–1360 (TRNADMQEELIASLEEQLKLS). The segment at 1360–1400 (SGEHSESSTPRPRSSPEETIEPESLHQLFEGESETESFYGF) is disordered. A phosphoserine mark is found at Ser-1364 and Ser-1367. Thr-1368 carries the post-translational modification Phosphothreonine. 2 positions are modified to phosphoserine: Ser-1373 and Ser-1374. Thr-1378 bears the Phosphothreonine mark. Positions 1380-1404 (EPESLHQLFEGESETESFYGFEEAD) match the Integrase domain-binding motif (IBM) motif. The residue at position 1392 (Ser-1392) is a Phosphoserine; by CK2. Thr-1394 is modified (phosphothreonine). At Ser-1396 the chain carries Phosphoserine; by CK2.

As to quaternary structure, interacts with CBX1, CBX3, MAD2L2 and CHAMP1. Interacts with CBX5; POGZ competes with PXVXL motif-containing proteins such as INCENP and TRIM28 for interaction with CBX5. Interacts (via IBM motif) with PSIP1 isoform 1 (via IBD domain); phosphorylation increases its affinity for PSIP1. Interacts with HDGFL2. Post-translationally, phosphorylation increases its interaction with PSIP1.

Its subcellular location is the nucleus. It is found in the chromosome. The protein resides in the cytoplasm. In terms of biological role, plays a role in mitotic cell cycle progression and is involved in kinetochore assembly and mitotic sister chromatid cohesion. Probably through its association with CBX5 plays a role in mitotic chromosome segregation by regulating aurora kinase B/AURKB activation and AURKB and CBX5 dissociation from chromosome arms. Promotes the repair of DNA double-strand breaks through the homologous recombination pathway. The protein is Pogo transposable element with ZNF domain (POGZ) of Homo sapiens (Human).